The following is a 157-amino-acid chain: Transcription elongation factor GreA (157 aa).

Residues 46–73 adopt a coiled-coil conformation; that stretch reads AEYHSARERQSFIEGRIAELEEIISAAE.

Belongs to the GreA/GreB family.

Its function is as follows. Necessary for efficient RNA polymerase transcription elongation past template-encoded arresting sites. The arresting sites in DNA have the property of trapping a certain fraction of elongating RNA polymerases that pass through, resulting in locked ternary complexes. Cleavage of the nascent transcript by cleavage factors such as GreA or GreB allows the resumption of elongation from the new 3'terminus. GreA releases sequences of 2 to 3 nucleotides. In Acidiphilium cryptum (strain JF-5), this protein is Transcription elongation factor GreA.